A 382-amino-acid chain; its full sequence is Cytoplasmic tRNA 2-thiolation protein 2 (382 aa).

The protein belongs to the CTU2/NCS2 family.

The protein localises to the cytoplasm. Its pathway is tRNA modification; 5-methoxycarbonylmethyl-2-thiouridine-tRNA biosynthesis. Plays a central role in 2-thiolation of mcm(5)S(2)U at tRNA wobble positions of tRNA(Lys), tRNA(Glu) and tRNA(Gln). May act by forming a heterodimer with NCS6 that ligates sulfur from thiocarboxylated URM1 onto the uridine of tRNAs at wobble position. Prior mcm(5) tRNA modification by the elongator complex is required for 2-thiolation. May also be involved in protein urmylation. The sequence is that of Cytoplasmic tRNA 2-thiolation protein 2 from Phaeosphaeria nodorum (strain SN15 / ATCC MYA-4574 / FGSC 10173) (Glume blotch fungus).